The chain runs to 404 residues: MKLPIYLDYSATTPVDPRVAQKMADCLLVDGNFGNPASRSHVFGWKAEEAVENGRRQVAELINADPREIVWTSGATESDNLALKGVAHFYQTKGKHIITSKIEHKAVLDTARQLEREGFEVTYLEPGEDGIVTPAMVEAVLRDDTILVSLMHVNNEVGSINDIAAIGELTRSRGVLFHVDAAQSAGKVEIDLQKLKVDLMSFSAHKVYGPKGIGALYVSRKPRVRLEAIIHGGGHERGMRSGTLPTHQIVGMGEAFAIAKQEMVAENARIKALSDRFFKQVSNLEELYVNGSQTARVPHNLNLSFNYVEGESLLMSLKDIAVSSGSACTSASLEPSYVLRALGRNDELAHSSIRFSFGRFTTEEEVDYAAQKVCEAVNKLRELSPLWDMYKDGVDISKIEWAAH.

Residues 75–76 (AT), asparagine 155, glutamine 183, and 203–205 (SAH) each bind pyridoxal 5'-phosphate. Position 206 is an N6-(pyridoxal phosphate)lysine (lysine 206). A pyridoxal 5'-phosphate-binding site is contributed by threonine 243. Cysteine 328 acts as the Cysteine persulfide intermediate in catalysis. Residue cysteine 328 coordinates [2Fe-2S] cluster.

This sequence belongs to the class-V pyridoxal-phosphate-dependent aminotransferase family. NifS/IscS subfamily. In terms of assembly, homodimer. Forms a heterotetramer with IscU, interacts with other sulfur acceptors. Requires pyridoxal 5'-phosphate as cofactor.

Its subcellular location is the cytoplasm. The catalysed reaction is (sulfur carrier)-H + L-cysteine = (sulfur carrier)-SH + L-alanine. Its pathway is cofactor biosynthesis; iron-sulfur cluster biosynthesis. Functionally, master enzyme that delivers sulfur to a number of partners involved in Fe-S cluster assembly, tRNA modification or cofactor biosynthesis. Catalyzes the removal of elemental sulfur atoms from cysteine to produce alanine. Functions as a sulfur delivery protein for Fe-S cluster synthesis onto IscU, an Fe-S scaffold assembly protein, as well as other S acceptor proteins. In Pseudomonas putida (strain ATCC 700007 / DSM 6899 / JCM 31910 / BCRC 17059 / LMG 24140 / F1), this protein is Cysteine desulfurase IscS.